Reading from the N-terminus, the 337-residue chain is UDP-glucose 4-epimerase (337 aa).

NAD(+)-binding positions include 11–12 (YI), 31–36 (DNLSNA), 58–59 (DL), 80–84 (FAGLK), Asn-99, Ser-124, Tyr-149, Lys-153, and Phe-178. Substrate-binding residues include Ser-124 and Tyr-149. Tyr-149 (proton acceptor) is an active-site residue. Substrate is bound by residues Asn-179, 199-200 (NL), 216-218 (GIF), Arg-231, and 292-295 (RDGD).

Belongs to the NAD(P)-dependent epimerase/dehydratase family. In terms of assembly, homodimer. The cofactor is NAD(+).

It catalyses the reaction UDP-alpha-D-glucose = UDP-alpha-D-galactose. The protein operates within carbohydrate metabolism; galactose metabolism. Its function is as follows. Involved in the metabolism of galactose. Catalyzes the conversion of UDP-galactose (UDP-Gal) to UDP-glucose (UDP-Glc) through a mechanism involving the transient reduction of NAD. This Erwinia amylovora (Fire blight bacteria) protein is UDP-glucose 4-epimerase (galE).